The following is a 235-amino-acid chain: Small ribosomal subunit protein uS2c (235 aa).

Belongs to the universal ribosomal protein uS2 family.

The protein resides in the plastid. It is found in the chloroplast. In Huperzia lucidula (Shining clubmoss), this protein is Small ribosomal subunit protein uS2c (rps2).